Consider the following 732-residue polypeptide: Integrator complex subunit 13 (732 aa).

Over residues 564–648 (PPEEEERKKR…DETPHMEKSK (85 aa)) the composition is skewed to basic and acidic residues. The interval 564 to 650 (PPEEEERKKR…TPHMEKSKGP (87 aa)) is disordered. The short motif at 572–582 (KRGRKREDRED) is the Nuclear localization signal (NLS) element. Residue Lys-611 forms a Glycyl lysine isopeptide (Lys-Gly) (interchain with G-Cter in SUMO2) linkage. Residues Ser-623, Ser-626, and Ser-678 each carry the phosphoserine modification. A cleavage module binding motif (CMBM) region spans residues 649–694 (GPVSLLSLWSNRINTANSRKHQEFAGRLNSVNNRAELYQHLKEENG).

Belongs to the Integrator subunit 13 family. Component of the Integrator complex, composed of core subunits INTS1, INTS2, INTS3, INTS4, INTS5, INTS6, INTS7, INTS8, INTS9/RC74, INTS10, INTS11/CPSF3L, INTS12, INTS13, INTS14 and INTS15. The core complex associates with protein phosphatase 2A subunits PPP2CA and PPP2R1A, to form the Integrator-PP2A (INTAC) complex. INTS13 is part of the tail subcomplex, composed of INTS10, INTS13, INTS14 and INTS15. Interacts with transcription factors ZNF609 and ZNF655. Interacts with PAFAH1B1; this interaction may be required for proper recruitment of dynein complexes to the nuclear envelope at prophase.

Its subcellular location is the nucleus. The protein localises to the cytoplasm. In terms of biological role, component of the integrator complex, a multiprotein complex that terminates RNA polymerase II (Pol II) transcription in the promoter-proximal region of genes. The integrator complex provides a quality checkpoint during transcription elongation by driving premature transcription termination of transcripts that are unfavorably configured for transcriptional elongation: the complex terminates transcription by (1) catalyzing dephosphorylation of the C-terminal domain (CTD) of Pol II subunit POLR2A/RPB1 and SUPT5H/SPT5, (2) degrading the exiting nascent RNA transcript via endonuclease activity and (3) promoting the release of Pol II from bound DNA. The integrator complex is also involved in terminating the synthesis of non-coding Pol II transcripts, such as enhancer RNAs (eRNAs), small nuclear RNAs (snRNAs), telomerase RNAs and long non-coding RNAs (lncRNAs). Within the integrator complex, INTS13 is part of the integrator tail module and acts as a platform for the recruitment of transcription factors at promoters. At prophase, mediates recruitment of cytoplasmic dynein to the nuclear envelope, a step important for proper centrosome-nucleus coupling. At G2/M phase, may be required for proper spindle formation and execution of cytokinesis. This is Integrator complex subunit 13 from Mus musculus (Mouse).